The chain runs to 128 residues: Keratin-associated protein 2-1 (128 aa).

The segment at 5–112 (CCGSTFSSLS…SVQSPCCRPP (108 aa)) is 10 X 5 AA repeats of C-C-[CDPQRWG]-[APRS]-[CIPSTVD].

It belongs to the KRTAP type 2 family. As to quaternary structure, interacts with hair keratins.

In terms of biological role, in the hair cortex, hair keratin intermediate filaments are embedded in an interfilamentous matrix, consisting of hair keratin-associated proteins (KRTAP), which are essential for the formation of a rigid and resistant hair shaft through their extensive disulfide bond cross-linking with abundant cysteine residues of hair keratins. The matrix proteins include the high-sulfur and high-glycine-tyrosine keratins. This is Keratin-associated protein 2-1 (KRTAP2-1) from Homo sapiens (Human).